The chain runs to 141 residues: MAKKLVAVVKLQLPAGKATPAPPVGPALGQYGINIMAFVKEYNEKSASQAGSIVPVEISVYSDRSFVARLLTPPAADLLRKAAGIQKGASTPKRTTVGTITRAQLRQIAQQKLPDMNANDIEAAERIIAGTARSMGIKIVE.

The protein belongs to the universal ribosomal protein uL11 family. In terms of assembly, part of the ribosomal stalk of the 50S ribosomal subunit. Interacts with L10 and the large rRNA to form the base of the stalk. L10 forms an elongated spine to which L12 dimers bind in a sequential fashion forming a multimeric L10(L12)X complex. Post-translationally, one or more lysine residues are methylated.

Its function is as follows. Forms part of the ribosomal stalk which helps the ribosome interact with GTP-bound translation factors. The chain is Large ribosomal subunit protein uL11 from Chloroflexus aurantiacus (strain ATCC 29366 / DSM 635 / J-10-fl).